The primary structure comprises 544 residues: Pectinesterase 3 (544 aa).

3 N-linked (GlcNAc...) asparagine glycosylation sites follow: Asn-174, Asn-257, and Asn-291. Residues Thr-306 and Gln-336 each coordinate substrate. Asp-359 (proton donor) is an active-site residue. The active-site Nucleophile is the Asp-380. Substrate is bound by residues Arg-448 and Trp-450. Residue Asn-532 is glycosylated (N-linked (GlcNAc...) asparagine).

In the N-terminal section; belongs to the PMEI family. It in the C-terminal section; belongs to the pectinesterase family.

The protein localises to the secreted. The protein resides in the cell wall. It carries out the reaction [(1-&gt;4)-alpha-D-galacturonosyl methyl ester](n) + n H2O = [(1-&gt;4)-alpha-D-galacturonosyl](n) + n methanol + n H(+). It participates in glycan metabolism; pectin degradation; 2-dehydro-3-deoxy-D-gluconate from pectin: step 1/5. Its function is as follows. Acts in the modification of cell walls via demethylesterification of cell wall pectin. The sequence is that of Pectinesterase 3 (PME3) from Solanum lycopersicum (Tomato).